The sequence spans 735 residues: Type-3 glutamine synthetase (735 aa).

The GS beta-grasp domain occupies 89–183 (THYCHWFLPL…IPTAFCSWTG (95 aa)). Positions 188–621 (QKTPLLRSME…SLYDLVSTLV (434 aa)) constitute a GS catalytic domain.

The protein belongs to the glutamine synthetase family. Type 3 subfamily. In terms of assembly, homohexamer.

It catalyses the reaction L-glutamate + NH4(+) + ATP = L-glutamine + ADP + phosphate + H(+). In Dictyostelium discoideum (Social amoeba), this protein is Type-3 glutamine synthetase (glnA3).